The primary structure comprises 42 residues: MPTPLSLQALAKKVLATQHISKDHLYFEILWFMVAFFDAYSL.

This sequence belongs to the asfivirus MGF 360 family.

Plays a role in virus cell tropism, and may be required for efficient virus replication in macrophages. The polypeptide is Protein MGF 360-20R (African swine fever virus (strain Badajoz 1971 Vero-adapted) (Ba71V)).